The sequence spans 39 residues: Photosystem II reaction center protein L (39 aa).

A helical transmembrane segment spans residues 18–38; sequence SLYLGLLFVFVTGVLMSSYFF.

Belongs to the PsbL family. PSII is composed of 1 copy each of membrane proteins PsbA, PsbB, PsbC, PsbD, PsbE, PsbF, PsbH, PsbI, PsbJ, PsbK, PsbL, PsbM, PsbT, PsbX, PsbY, PsbZ, Psb30/Ycf12, peripheral proteins PsbO, CyanoQ (PsbQ), PsbU, PsbV and a large number of cofactors. It forms dimeric complexes.

The protein localises to the cellular thylakoid membrane. Functionally, one of the components of the core complex of photosystem II (PSII). PSII is a light-driven water:plastoquinone oxidoreductase that uses light energy to abstract electrons from H(2)O, generating O(2) and a proton gradient subsequently used for ATP formation. It consists of a core antenna complex that captures photons, and an electron transfer chain that converts photonic excitation into a charge separation. This subunit is found at the monomer-monomer interface and is required for correct PSII assembly and/or dimerization. This chain is Photosystem II reaction center protein L, found in Synechococcus sp. (strain CC9902).